The sequence spans 428 residues: Light-independent protochlorophyllide reductase subunit N (428 aa).

Positions 29, 54, and 115 each coordinate [4Fe-4S] cluster.

This sequence belongs to the BchN/ChlN family. In terms of assembly, protochlorophyllide reductase is composed of three subunits; BchL, BchN and BchB. Forms a heterotetramer of two BchB and two BchN subunits. It depends on [4Fe-4S] cluster as a cofactor.

The catalysed reaction is chlorophyllide a + oxidized 2[4Fe-4S]-[ferredoxin] + 2 ADP + 2 phosphate = protochlorophyllide a + reduced 2[4Fe-4S]-[ferredoxin] + 2 ATP + 2 H2O. It participates in porphyrin-containing compound metabolism; bacteriochlorophyll biosynthesis (light-independent). Its function is as follows. Component of the dark-operative protochlorophyllide reductase (DPOR) that uses Mg-ATP and reduced ferredoxin to reduce ring D of protochlorophyllide (Pchlide) to form chlorophyllide a (Chlide). This reaction is light-independent. The NB-protein (BchN-BchB) is the catalytic component of the complex. The chain is Light-independent protochlorophyllide reductase subunit N from Cereibacter sphaeroides (strain KD131 / KCTC 12085) (Rhodobacter sphaeroides).